Here is a 233-residue protein sequence, read N- to C-terminus: 5'-methylthioadenosine/S-adenosylhomocysteine nucleosidase (233 aa).

The active-site Proton acceptor is the Glu12. Residues Gly78, Ile156, and Met177–Glu178 contribute to the substrate site. The active-site Proton donor is the Asp201.

It belongs to the PNP/UDP phosphorylase family. MtnN subfamily.

The enzyme catalyses S-adenosyl-L-homocysteine + H2O = S-(5-deoxy-D-ribos-5-yl)-L-homocysteine + adenine. It catalyses the reaction S-methyl-5'-thioadenosine + H2O = 5-(methylsulfanyl)-D-ribose + adenine. The catalysed reaction is 5'-deoxyadenosine + H2O = 5-deoxy-D-ribose + adenine. It functions in the pathway amino-acid biosynthesis; L-methionine biosynthesis via salvage pathway; S-methyl-5-thio-alpha-D-ribose 1-phosphate from S-methyl-5'-thioadenosine (hydrolase route): step 1/2. In terms of biological role, catalyzes the irreversible cleavage of the glycosidic bond in both 5'-methylthioadenosine (MTA) and S-adenosylhomocysteine (SAH/AdoHcy) to adenine and the corresponding thioribose, 5'-methylthioribose and S-ribosylhomocysteine, respectively. Also cleaves 5'-deoxyadenosine, a toxic by-product of radical S-adenosylmethionine (SAM) enzymes, into 5-deoxyribose and adenine. The protein is 5'-methylthioadenosine/S-adenosylhomocysteine nucleosidase of Listeria welshimeri serovar 6b (strain ATCC 35897 / DSM 20650 / CCUG 15529 / CIP 8149 / NCTC 11857 / SLCC 5334 / V8).